The primary structure comprises 464 residues: Citrate synthase 5, mitochondrial (464 aa).

The transit peptide at 1–25 (MVFFRSVSAISRLRSRAVQQSSLSN) directs the protein to the mitochondrion. Residues His300, His346, and Asp401 contribute to the active site.

This sequence belongs to the citrate synthase family.

It localises to the mitochondrion matrix. The catalysed reaction is oxaloacetate + acetyl-CoA + H2O = citrate + CoA + H(+). Its pathway is carbohydrate metabolism; tricarboxylic acid cycle; isocitrate from oxaloacetate: step 1/2. The chain is Citrate synthase 5, mitochondrial (CSY5) from Arabidopsis thaliana (Mouse-ear cress).